The following is a 384-amino-acid chain: G protein-coupled receptor 88 (384 aa).

The Extracellular segment spans residues 1-35; the sequence is MTNSSSTSTSTTTGGSLLLLCEEEESWAGRRIPVS. The N-linked (GlcNAc...) asparagine glycan is linked to Asn3. Residues 36-56 traverse the membrane as a helical segment; sequence LLYSGLAIGGTLANGMVIYLV. Residues 57–73 lie on the Cytoplasmic side of the membrane; sequence SSFRKLQTTSNAFIVNG. Residues 74 to 94 traverse the membrane as a helical segment; the sequence is CAADLSVCALWMPQEAVLGLL. The Extracellular portion of the chain corresponds to 95–116; that stretch reads PAGSAEPPGDWDSGGGSYRLLR. Residues 117–136 form a helical membrane-spanning segment; it reads GGLLGLGLTVSLLSHCLVAL. Residues 137–158 lie on the Cytoplasmic side of the membrane; it reads NRYLLITRAPATYQVLYQRRHT. The chain crosses the membrane as a helical span at residues 159-179; that stretch reads AGMLALSWALALGLVLLLPPW. Residues 180–195 are Extracellular-facing; it reads APKPGAEPPQVHYPAL. Residues 196–216 traverse the membrane as a helical segment; it reads LAAGALLAQTALLLHCYLGIV. Residues 217–285 lie on the Cytoplasmic side of the membrane; sequence RRVRVSVKRV…RAQRRLSGLS (69 aa). A helical membrane pass occupies residues 286–306; it reads VLLLCCVFLLATQPLVWVSLA. The Extracellular segment spans residues 307-310; that stretch reads SGFS. The helical transmembrane segment at 311 to 331 threads the bilayer; the sequence is LPVPWGVQAASWLLCCALSAL. Topologically, residues 332–384 are cytoplasmic; sequence NPLLYTWRNEEFRRSVRSVLPGVGDAAAAAAAATAVPAMSQAQLGTRAAGQHW.

The protein belongs to the G-protein coupled receptor 1 family. As to expression, expressed predominantly in the striatum. Expressed also in olfactory tubercle, nucleus accumbens, amygdala, and neocortex. Spinal cord, pons, and medulla expression remains discrete. Also expressed in peripheral tissues, including adrenal cortex (16 dpc to 21 dpc) and cochlear ganglia (19 dpc to P3) and also at moderate levels in retina (18 dpc to 19 dpc) and spleen (21 dpc to P7).

The protein resides in the cell membrane. The protein localises to the cell projection. It is found in the cilium membrane. It localises to the cytoplasm. Its subcellular location is the nucleus. Orphan G protein-coupled receptor implicated in a large repertoire of behavioral responses that engage motor activities, spatial learning, and emotional processing. May play a role in the regulation of cognitive and motor function. Couples with the heterotrimeric G protein complex of the G(i) subfamily, consisting of GNAI1, GNB1 and GNG2, thereby acting through a G(i)-mediated pathway. Plays a role in the attenuation of D1 dopamine receptor (D1R)-mediated cAMP response in ciliated cells. In non-ciliated cells, involved in the inhibition of the beta-2 adrenergic receptor (B2AR) response. The polypeptide is G protein-coupled receptor 88 (Gpr88) (Rattus norvegicus (Rat)).